The primary structure comprises 441 residues: MIMAAEEVFWRNPKYHAFAQAIRTIPLRERDVKEAEERLRRFAPYIAKVFPETQPAHGIIESPLVRIPNMQRRLEKMFQTNIEGDLLLKCDSHLPISGSIKARGGIYEVLKHAEDLALANGMIAIGEDYAVMASEEFRQFFSRYSLVVGSTGNLGLSIGIIGAQLGFRVTVHMSADAKQWKKDLLRSKGVTVIEHLTDYNKVVEEARRQSAEDPTSYFIDDENSIHLFLGYAVAAFRLKKQLEDMNITVDETHPLFVYLPCGVGGGPGGVTFGLKLVYGDHVHCFFAEPTHSPCMLLGLMTGEHDRVSVQDFGLDNKTEADGLAVGRPSRLVGNMLENVISGVYTVDDSTLYRLLAAMVETEEIYLEPSALAGVAGPVRLFRDSAGQTYVEENDLKEKMKNAVHICWATGGSMVPKGVMEAYYREGMRIETMTGNCFSEGR.

Lys101 is subject to N6-(pyridoxal phosphate)lysine.

Belongs to the serine/threonine dehydratase family. DsdA subfamily. The cofactor is pyridoxal 5'-phosphate.

The enzyme catalyses D-serine = pyruvate + NH4(+). This chain is Probable D-serine dehydratase, found in Geobacillus kaustophilus (strain HTA426).